A 295-amino-acid polypeptide reads, in one-letter code: Bifunctional protein FolD (295 aa).

NADP(+)-binding positions include glycine 166–serine 168, threonine 195, and valine 236.

It belongs to the tetrahydrofolate dehydrogenase/cyclohydrolase family. As to quaternary structure, homodimer.

The catalysed reaction is (6R)-5,10-methylene-5,6,7,8-tetrahydrofolate + NADP(+) = (6R)-5,10-methenyltetrahydrofolate + NADPH. It carries out the reaction (6R)-5,10-methenyltetrahydrofolate + H2O = (6R)-10-formyltetrahydrofolate + H(+). Its pathway is one-carbon metabolism; tetrahydrofolate interconversion. Functionally, catalyzes the oxidation of 5,10-methylenetetrahydrofolate to 5,10-methenyltetrahydrofolate and then the hydrolysis of 5,10-methenyltetrahydrofolate to 10-formyltetrahydrofolate. The protein is Bifunctional protein FolD of Syntrophobacter fumaroxidans (strain DSM 10017 / MPOB).